A 1465-amino-acid chain; its full sequence is Gag-Pol polyprotein (1465 aa).

Residue G2 is the site of N-myristoyl glycine; by host attachment. The short motif at 16-22 is the Nuclear export signal element; the sequence is FEHIRLR. Positions 26-32 match the Nuclear localization signal motif; that stretch reads KKKYQIK. The interval 116-144 is disordered; that stretch reads NAERNTTETSSGQKKNDKGVTVPPGGSQN. CCHC-type zinc fingers lie at residues 402 to 419 and 423 to 440; these read VKCYNCGKFGHMQRQCPE and MRCLKCGKPGHLAKDCRG. In terms of domain architecture, Peptidase A2 spans 532-603; that stretch reads IRALLDTGAD…TPINIIGRNI (72 aa). Catalysis depends on D537, which acts as the For protease activity; shared with dimeric partner. A Reverse transcriptase domain is found at 659 to 849; sequence EGKISKIGGE…PPYEWMGYKL (191 aa). The Mg(2+) site is built by D725, D800, and D801. The interval 842–850 is RT 'primer grip'; the sequence is YEWMGYKLW. Residues 1012 to 1028 carry the Tryptophan repeat motif motif; it reads WEQWWADYWQVSWIPDW. The RNase H type-1 domain maps to 1048-1171; the sequence is IPKEDVYYVD…IDKLVSQGMR (124 aa). The Mg(2+) site is built by D1057, E1092, D1112, and D1163. The segment at 1177 to 1218 adopts an Integrase-type zinc-finger fold; the sequence is EKIEEAQEEHERYHNNWRNLADTYGLPQIVAKEIVAMCPKCQ. 4 residues coordinate Zn(2+): H1186, H1190, C1214, and C1217. In terms of domain architecture, Integrase catalytic spans 1228–1378; sequence VDASPGVWQM…TPAERLINMI (151 aa). D1238 and D1290 together coordinate Mg(2+). A DNA-binding region (integrase-type) is located at residues 1397-1444; that stretch reads FRVYYREGRDPVWKGPGQLIWKGEGAVVIKGGVELKEYPRRKAKIIKD.

In terms of assembly, homotrimer. Interacts with gp41 (via C-terminus). Homodimer. The active site consists of two apposed aspartic acid residues. As to quaternary structure, heterodimer of p66 RT and p51 RT (RT p66/p51). Heterodimerization of RT is essential for DNA polymerase activity. Despite the sequence identities, p66 RT and p51 RT have distinct folding. In terms of assembly, homotetramer; may further associate as a homohexadecamer. It depends on Mg(2+) as a cofactor. In terms of processing, specific enzymatic cleavages by the viral protease yield mature proteins. The protease is released by autocatalytic cleavage. The polyprotein is cleaved during and after budding, this process is termed maturation. Proteolytic cleavage of p66 RT removes the RNase H domain to yield the p51 RT subunit. Post-translationally, capsid protein p24 is phosphorylated.

It is found in the virion. The protein localises to the host nucleus. It localises to the host cytoplasm. The protein resides in the host cell membrane. It catalyses the reaction Specific for a P1 residue that is hydrophobic, and P1' variable, but often Pro.. The enzyme catalyses Endohydrolysis of RNA in RNA/DNA hybrids. Three different cleavage modes: 1. sequence-specific internal cleavage of RNA. Human immunodeficiency virus type 1 and Moloney murine leukemia virus enzymes prefer to cleave the RNA strand one nucleotide away from the RNA-DNA junction. 2. RNA 5'-end directed cleavage 13-19 nucleotides from the RNA end. 3. DNA 3'-end directed cleavage 15-20 nucleotides away from the primer terminus.. It carries out the reaction 3'-end directed exonucleolytic cleavage of viral RNA-DNA hybrid.. The catalysed reaction is DNA(n) + a 2'-deoxyribonucleoside 5'-triphosphate = DNA(n+1) + diphosphate. With respect to regulation, the viral protease is inhibited by many synthetic protease inhibitors (PIs), such as amprenavir, atazanavir, indinavir, loprinavir, nelfinavir, ritonavir and saquinavir. RT can be inhibited either by nucleoside RT inhibitors (NRTIs) or by non nucleoside RT inhibitors (NNRTIs). NRTIs act as chain terminators, whereas NNRTIs inhibit DNA polymerization by binding a small hydrophobic pocket near the RT active site and inducing an allosteric change in this region. Classical NRTIs are abacavir, adefovir (PMEA), didanosine (ddI), lamivudine (3TC), stavudine (d4T), tenofovir (PMPA), zalcitabine (ddC), and zidovudine (AZT). Classical NNRTIs are atevirdine (BHAP U-87201E), delavirdine, efavirenz (DMP-266), emivirine (I-EBU), and nevirapine (BI-RG-587). The tritherapies used as a basic effective treatment of AIDS associate two NRTIs and one NNRTI. Use of protease inhibitors in tritherapy regimens permit more ambitious therapeutic strategies. In terms of biological role, gag-Pol polyprotein and Gag polyprotein may regulate their own translation, by the binding genomic RNA in the 5'-UTR. At low concentration, Gag-Pol and Gag would promote translation, whereas at high concentration, the polyproteins encapsidate genomic RNA and then shut off translation. Its function is as follows. Matrix protein p17 has two main functions: in infected cell, it targets Gag and Gag-pol polyproteins to the plasma membrane via a multipartite membrane-binding signal, that includes its myristointegration complex. The myristoylation signal and the NLS exert conflicting influences its subcellular localization. The key regulation of these motifs might be phosphorylation of a portion of MA molecules on the C-terminal tyrosine at the time of virus maturation, by virion-associated cellular tyrosine kinase. Implicated in the release from host cell mediated by Vpu. Functionally, capsid protein p24 forms the conical core that encapsulates the genomic RNA-nucleocapsid complex in the virion. The core is constituted by capsid protein hexamer subunits. The core is disassembled soon after virion entry. Interaction with host PPIA/CYPA protects the virus from restriction by host TRIM5-alpha and from an unknown antiviral activity in host cells. This capsid restriction by TRIM5 is one of the factors which restricts SIV to the simian species. Nucleocapsid protein p7 encapsulates and protects viral dimeric unspliced (genomic) RNA. Binds these RNAs through its zinc fingers. Facilitates rearangement of nucleic acid secondary structure during retrotranscription of genomic RNA. This capability is referred to as nucleic acid chaperone activity. In terms of biological role, the aspartyl protease mediates proteolytic cleavages of Gag and Gag-Pol polyproteins during or shortly after the release of the virion from the plasma membrane. Cleavages take place as an ordered, step-wise cascade to yield mature proteins. This process is called maturation. Displays maximal activity during the budding process just prior to particle release from the cell. Also cleaves Nef and Vif, probably concomitantly with viral structural proteins on maturation of virus particles. Hydrolyzes host EIF4GI and PABP1 in order to shut off the capped cellular mRNA translation. The resulting inhibition of cellular protein synthesis serves to ensure maximal viral gene expression and to evade host immune response. Its function is as follows. Reverse transcriptase/ribonuclease H (RT) is a multifunctional enzyme that converts the viral dimeric RNA genome into dsDNA in the cytoplasm, shortly after virus entry into the cell. This enzyme displays a DNA polymerase activity that can copy either DNA or RNA templates, and a ribonuclease H (RNase H) activity that cleaves the RNA strand of RNA-DNA heteroduplexes in a partially processive 3' to 5' endonucleasic mode. Conversion of viral genomic RNA into dsDNA requires many steps. A tRNA binds to the primer-binding site (PBS) situated at the 5'-end of the viral RNA. RT uses the 3' end of the tRNA primer to perform a short round of RNA-dependent minus-strand DNA synthesis. The reading proceeds through the U5 region and ends after the repeated (R) region which is present at both ends of viral RNA. The portion of the RNA-DNA heteroduplex is digested by the RNase H, resulting in a ssDNA product attached to the tRNA primer. This ssDNA/tRNA hybridizes with the identical R region situated at the 3' end of viral RNA. This template exchange, known as minus-strand DNA strong stop transfer, can be either intra- or intermolecular. RT uses the 3' end of this newly synthesized short ssDNA to perform the RNA-dependent minus-strand DNA synthesis of the whole template. RNase H digests the RNA template except for two polypurine tracts (PPTs) situated at the 5'-end and near the center of the genome. It is not clear if both polymerase and RNase H activities are simultaneous. RNase H can probably proceed both in a polymerase-dependent (RNA cut into small fragments by the same RT performing DNA synthesis) and a polymerase-independent mode (cleavage of remaining RNA fragments by free RTs). Secondly, RT performs DNA-directed plus-strand DNA synthesis using the PPTs that have not been removed by RNase H as primers. PPTs and tRNA primers are then removed by RNase H. The 3' and 5' ssDNA PBS regions hybridize to form a circular dsDNA intermediate. Strand displacement synthesis by RT to the PBS and PPT ends produces a blunt ended, linear dsDNA copy of the viral genome that includes long terminal repeats (LTRs) at both ends. Functionally, integrase catalyzes viral DNA integration into the host chromosome, by performing a series of DNA cutting and joining reactions. This enzyme activity takes place after virion entry into a cell and reverse transcription of the RNA genome in dsDNA. The first step in the integration process is 3' processing. This step requires a complex comprising the viral genome, matrix protein, Vpr and integrase. This complex is called the pre-integration complex (PIC). The integrase protein removes 2 nucleotides from each 3' end of the viral DNA, leaving recessed CA OH's at the 3' ends. In the second step, the PIC enters cell nucleus. This process is mediated through integrase and Vpr proteins, and allows the virus to infect a non dividing cell. This ability to enter the nucleus is specific of lentiviruses, other retroviruses cannot and rely on cell division to access cell chromosomes. In the third step, termed strand transfer, the integrase protein joins the previously processed 3' ends to the 5' ends of strands of target cellular DNA at the site of integration. The 5'-ends are produced by integrase-catalyzed staggered cuts, 5 bp apart. A Y-shaped, gapped, recombination intermediate results, with the 5'-ends of the viral DNA strands and the 3' ends of target DNA strands remaining unjoined, flanking a gap of 5 bp. The last step is viral DNA integration into host chromosome. This involves host DNA repair synthesis in which the 5 bp gaps between the unjoined strands are filled in and then ligated. Since this process occurs at both cuts flanking the SIV genome, a 5 bp duplication of host DNA is produced at the ends of SIV integration. Alternatively, Integrase may catalyze the excision of viral DNA just after strand transfer, this is termed disintegration. This chain is Gag-Pol polyprotein (gag-pol), found in Cercopithecidae (Old World monkeys).